Here is a 357-residue protein sequence, read N- to C-terminus: Holliday junction branch migration complex subunit RuvB (357 aa).

The span at 1 to 10 (MAIQSDSLSS) shows a compositional bias: polar residues. Residues 1 to 30 (MAIQSDSLSSRPDAPRLVAPAPASPNEESI) are disordered. Positions 5–195 (SDSLSSRPDA…FGIVSRLEFY (191 aa)) are large ATPase domain (RuvB-L). ATP-binding positions include Leu34, Arg35, Gly76, Lys79, Thr80, Thr81, 142–144 (EDF), Arg185, Tyr195, and Arg232. Thr80 contacts Mg(2+). Residues 196–266 (NTDDLAHIVT…AANQALAMLE (71 aa)) are small ATPAse domain (RuvB-S). A head domain (RuvB-H) region spans residues 269–357 (PQGLDLMDRK…QPSSGDLFGA (89 aa)). Residues Arg305, Arg324, and Arg329 each contribute to the DNA site.

The protein belongs to the RuvB family. As to quaternary structure, homohexamer. Forms an RuvA(8)-RuvB(12)-Holliday junction (HJ) complex. HJ DNA is sandwiched between 2 RuvA tetramers; dsDNA enters through RuvA and exits via RuvB. An RuvB hexamer assembles on each DNA strand where it exits the tetramer. Each RuvB hexamer is contacted by two RuvA subunits (via domain III) on 2 adjacent RuvB subunits; this complex drives branch migration. In the full resolvosome a probable DNA-RuvA(4)-RuvB(12)-RuvC(2) complex forms which resolves the HJ.

The protein resides in the cytoplasm. The enzyme catalyses ATP + H2O = ADP + phosphate + H(+). Functionally, the RuvA-RuvB-RuvC complex processes Holliday junction (HJ) DNA during genetic recombination and DNA repair, while the RuvA-RuvB complex plays an important role in the rescue of blocked DNA replication forks via replication fork reversal (RFR). RuvA specifically binds to HJ cruciform DNA, conferring on it an open structure. The RuvB hexamer acts as an ATP-dependent pump, pulling dsDNA into and through the RuvAB complex. RuvB forms 2 homohexamers on either side of HJ DNA bound by 1 or 2 RuvA tetramers; 4 subunits per hexamer contact DNA at a time. Coordinated motions by a converter formed by DNA-disengaged RuvB subunits stimulates ATP hydrolysis and nucleotide exchange. Immobilization of the converter enables RuvB to convert the ATP-contained energy into a lever motion, pulling 2 nucleotides of DNA out of the RuvA tetramer per ATP hydrolyzed, thus driving DNA branch migration. The RuvB motors rotate together with the DNA substrate, which together with the progressing nucleotide cycle form the mechanistic basis for DNA recombination by continuous HJ branch migration. Branch migration allows RuvC to scan DNA until it finds its consensus sequence, where it cleaves and resolves cruciform DNA. The chain is Holliday junction branch migration complex subunit RuvB from Bordetella avium (strain 197N).